A 298-amino-acid polypeptide reads, in one-letter code: Diphthine methyl ester synthase (298 aa).

Residues L9, D85, G88, 113-114 (SV), L164, L222, and H247 contribute to the S-adenosyl-L-methionine site.

It belongs to the diphthine synthase family.

The protein localises to the cytoplasm. The enzyme catalyses 2-[(3S)-amino-3-carboxypropyl]-L-histidyl-[translation elongation factor 2] + 4 S-adenosyl-L-methionine = diphthine methyl ester-[translation elongation factor 2] + 4 S-adenosyl-L-homocysteine + 3 H(+). The protein operates within protein modification; peptidyl-diphthamide biosynthesis. In terms of biological role, S-adenosyl-L-methionine-dependent methyltransferase that catalyzes four methylations of the modified target histidine residue in translation elongation factor 2 (EF-2), to form an intermediate called diphthine methyl ester. The four successive methylation reactions represent the second step of diphthamide biosynthesis. This is Diphthine methyl ester synthase (DPH5) from Candida glabrata (strain ATCC 2001 / BCRC 20586 / JCM 3761 / NBRC 0622 / NRRL Y-65 / CBS 138) (Yeast).